We begin with the raw amino-acid sequence, 268 residues long: Hydroxyethylthiazole kinase (268 aa).

M45 lines the substrate pocket. Positions 121 and 167 each coordinate ATP. A substrate-binding site is contributed by G194.

The protein belongs to the Thz kinase family. Requires Mg(2+) as cofactor.

The catalysed reaction is 5-(2-hydroxyethyl)-4-methylthiazole + ATP = 4-methyl-5-(2-phosphooxyethyl)-thiazole + ADP + H(+). Its pathway is cofactor biosynthesis; thiamine diphosphate biosynthesis; 4-methyl-5-(2-phosphoethyl)-thiazole from 5-(2-hydroxyethyl)-4-methylthiazole: step 1/1. Functionally, catalyzes the phosphorylation of the hydroxyl group of 4-methyl-5-beta-hydroxyethylthiazole (THZ). In Bacillus cereus (strain ZK / E33L), this protein is Hydroxyethylthiazole kinase.